A 411-amino-acid chain; its full sequence is E3 ubiquitin-protein ligase PUB23 (411 aa).

One can recognise a U-box domain in the interval 11–86 (EIPPFFLCPI…QSWCTLNASY (76 aa)). ARM repeat units lie at residues 132-173 (ATNK…HLET), 175-203 (ETVL…RGMY), 221-261 (DPMQ…NICP), and 263-306 (GRNR…LLCQ).

As to quaternary structure, interacts with RPN12A. Post-translationally, auto-ubiquitinated.

It is found in the cytoplasm. It catalyses the reaction S-ubiquitinyl-[E2 ubiquitin-conjugating enzyme]-L-cysteine + [acceptor protein]-L-lysine = [E2 ubiquitin-conjugating enzyme]-L-cysteine + N(6)-ubiquitinyl-[acceptor protein]-L-lysine.. It participates in protein modification; protein ubiquitination. Functionally, E3 ubiquitin-protein ligase that negatively regulates water stress response. May control in coordination with PUB23 a drought signaling pathway by ubiquitinating cytosolic RPN12a. Acts as a negative regulator of the immunity triggered by the pathogen-associated molecular patterns (PAMPs), in association with PUB22 and PUB24. The polypeptide is E3 ubiquitin-protein ligase PUB23 (PUB23) (Arabidopsis thaliana (Mouse-ear cress)).